Reading from the N-terminus, the 229-residue chain is Ribulose-phosphate 3-epimerase (229 aa).

Substrate is bound at residue Ser-13. A divalent metal cation is bound by residues His-36, Asp-38, and His-69. Asp-38 acts as the Proton acceptor in catalysis. Substrate is bound by residues His-69, 145-148 (GFGG), 178-180 (DGG), and 200-201 (GS). Asp-178 is an a divalent metal cation binding site. The active-site Proton donor is the Asp-178.

The protein belongs to the ribulose-phosphate 3-epimerase family. Requires a divalent metal cation as cofactor.

It catalyses the reaction D-ribulose 5-phosphate = D-xylulose 5-phosphate. It participates in carbohydrate degradation. Catalyzes the reversible epimerization of D-ribulose 5-phosphate to D-xylulose 5-phosphate. This chain is Ribulose-phosphate 3-epimerase, found in Mycobacterium bovis (strain ATCC BAA-935 / AF2122/97).